The primary structure comprises 139 residues: ATP synthase epsilon chain (139 aa).

The protein belongs to the ATPase epsilon chain family. As to quaternary structure, F-type ATPases have 2 components, CF(1) - the catalytic core - and CF(0) - the membrane proton channel. CF(1) has five subunits: alpha(3), beta(3), gamma(1), delta(1), epsilon(1). CF(0) has three main subunits: a, b and c.

Its subcellular location is the cell inner membrane. Its function is as follows. Produces ATP from ADP in the presence of a proton gradient across the membrane. In Acinetobacter baylyi (strain ATCC 33305 / BD413 / ADP1), this protein is ATP synthase epsilon chain.